Reading from the N-terminus, the 377-residue chain is Histone deacetylase 8 (377 aa).

Residues 5–336 (RVDVFWHEGM…LHAMLEGVLK (332 aa)) are histone deacetylase. The active-site Proton donor/acceptor is H145. 3 residues coordinate Zn(2+): D182, H184, and D274.

This sequence belongs to the histone deacetylase family. Zn(2+) serves as cofactor. As to expression, expressed in stems, leaves, flowers, siliques and mature seeds.

The protein resides in the nucleus. It is found in the cytoplasm. It carries out the reaction N(6)-acetyl-L-lysyl-[histone] + H2O = L-lysyl-[histone] + acetate. Responsible for the deacetylation of lysine residues on the N-terminal part of the core histones (H2A, H2B, H3 and H4). Histone deacetylation gives a tag for epigenetic repression and plays an important role in transcriptional regulation, cell cycle progression and developmental events. Histone deacetylases act via the formation of large multiprotein complexes. This chain is Histone deacetylase 8, found in Arabidopsis thaliana (Mouse-ear cress).